The following is a 350-amino-acid chain: Aminomethyltransferase (350 aa).

Belongs to the GcvT family. The glycine cleavage system is composed of four proteins: P, T, L and H.

The enzyme catalyses N(6)-[(R)-S(8)-aminomethyldihydrolipoyl]-L-lysyl-[protein] + (6S)-5,6,7,8-tetrahydrofolate = N(6)-[(R)-dihydrolipoyl]-L-lysyl-[protein] + (6R)-5,10-methylene-5,6,7,8-tetrahydrofolate + NH4(+). The glycine cleavage system catalyzes the degradation of glycine. The polypeptide is Aminomethyltransferase (Aquifex aeolicus (strain VF5)).